The primary structure comprises 393 residues: Cell division protein FtsZ 2 (393 aa).

Positions 1 to 28 (MQDIVQDALDNAEAEQREMDGDGDGDEF) are disordered. Residues 40–44 (GAGNN), 127–129 (GTG), Glu-158, Arg-161, and Asp-204 each bind GTP. The disordered stretch occupies residues 339–393 (GPSTQKQADKSRRELQDVDSKQRAADDAGAGGFGGAHSDGGQDEVEQENGLDVIR). Residues 345–364 (QADKSRRELQDVDSKQRAAD) are compositionally biased toward basic and acidic residues. Over residues 367-376 (GAGGFGGAHS) the composition is skewed to gly residues.

Belongs to the FtsZ family. Homodimer. Polymerizes to form a dynamic ring structure in a strictly GTP-dependent manner. Interacts directly with several other division proteins.

The protein resides in the cytoplasm. In terms of biological role, essential cell division protein that forms a contractile ring structure (Z ring) at the future cell division site. The regulation of the ring assembly controls the timing and the location of cell division. One of the functions of the FtsZ ring is to recruit other cell division proteins to the septum to produce a new cell wall between the dividing cells. Binds GTP and shows GTPase activity. Overexpression causes significant changes in cell morphology. This chain is Cell division protein FtsZ 2, found in Halobacterium salinarum (strain ATCC 29341 / DSM 671 / R1).